A 177-amino-acid polypeptide reads, in one-letter code: tRNA (cytidine(56)-2'-O)-methyltransferase (177 aa).

Residues Leu-84 and 109 to 113 (GAEKV) each bind S-adenosyl-L-methionine.

It belongs to the aTrm56 family. As to quaternary structure, homodimer.

It is found in the cytoplasm. It catalyses the reaction cytidine(56) in tRNA + S-adenosyl-L-methionine = 2'-O-methylcytidine(56) in tRNA + S-adenosyl-L-homocysteine + H(+). In terms of biological role, specifically catalyzes the AdoMet-dependent 2'-O-ribose methylation of cytidine at position 56 in tRNAs. This is tRNA (cytidine(56)-2'-O)-methyltransferase from Methanosarcina mazei (strain ATCC BAA-159 / DSM 3647 / Goe1 / Go1 / JCM 11833 / OCM 88) (Methanosarcina frisia).